A 252-amino-acid polypeptide reads, in one-letter code: Phosphomannomutase (252 aa).

The Nucleophile role is filled by Asp13. 2 residues coordinate Mg(2+): Asp13 and Asp15. Asp15 acts as the Proton donor/acceptor in catalysis. Positions 22, 124, 135, 142, 180, and 182 each coordinate alpha-D-mannose 1-phosphate. Mg(2+) contacts are provided by Asp208, Tyr220, and Thr225.

Belongs to the eukaryotic PMM family. In terms of assembly, homodimer. Mg(2+) serves as cofactor. Expressed in roots, leaves, stems and flowers.

The protein resides in the cytoplasm. The catalysed reaction is alpha-D-mannose 1-phosphate = D-mannose 6-phosphate. It functions in the pathway nucleotide-sugar biosynthesis; GDP-alpha-D-mannose biosynthesis; alpha-D-mannose 1-phosphate from D-fructose 6-phosphate: step 2/2. Its function is as follows. Catalyzes the interconversion of mannose-6-phosphate to mannose-1-phosphate, the precursor for the synthesis of GDP-mannose. GDP-mannose is an essential sugar nucleotide for the synthesis of D-mannose-containing cell wall polysaccharides (galactomannans and glucomannans), glycolipids, glycoproteins and the antioxidant L-ascorbate. Involved in the biosynthesis of ascorbate and polysaccharides in response to abiotic stress during seed germination. This Dendrobium officinale (Orchid) protein is Phosphomannomutase.